Reading from the N-terminus, the 287-residue chain is ATP synthase gamma chain (287 aa).

This sequence belongs to the ATPase gamma chain family. F-type ATPases have 2 components, CF(1) - the catalytic core - and CF(0) - the membrane proton channel. CF(1) has five subunits: alpha(3), beta(3), gamma(1), delta(1), epsilon(1). CF(0) has three main subunits: a, b and c.

Its subcellular location is the cell inner membrane. Functionally, produces ATP from ADP in the presence of a proton gradient across the membrane. The gamma chain is believed to be important in regulating ATPase activity and the flow of protons through the CF(0) complex. The protein is ATP synthase gamma chain of Parabacteroides distasonis (strain ATCC 8503 / DSM 20701 / CIP 104284 / JCM 5825 / NCTC 11152).